Reading from the N-terminus, the 78-residue chain is UPF0270 protein YE3952 (78 aa).

Belongs to the UPF0270 family.

This is UPF0270 protein YE3952 from Yersinia enterocolitica serotype O:8 / biotype 1B (strain NCTC 13174 / 8081).